Here is a 292-residue protein sequence, read N- to C-terminus: Cytidine deaminase (292 aa).

2 consecutive CMP/dCMP-type deaminase domains span residues 47 to 167 and 186 to 292; these read TPLK…FGPK and DHQD…YYSL. Substrate is bound at residue 88-90; the sequence is NQE. H101 provides a ligand contact to Zn(2+). E103 serves as the catalytic Proton donor. Zn(2+)-binding residues include C128 and C131.

The protein belongs to the cytidine and deoxycytidylate deaminase family. Homodimer. It depends on Zn(2+) as a cofactor.

The enzyme catalyses cytidine + H2O + H(+) = uridine + NH4(+). It catalyses the reaction 2'-deoxycytidine + H2O + H(+) = 2'-deoxyuridine + NH4(+). Functionally, this enzyme scavenges exogenous and endogenous cytidine and 2'-deoxycytidine for UMP synthesis. The polypeptide is Cytidine deaminase (Haemophilus influenzae (strain 86-028NP)).